Consider the following 230-residue polypeptide: NAD(P)H-hydrate epimerase (230 aa).

The 208-residue stretch at 11 to 218 (AIDVDQELFT…ALQRKYGLNL (208 aa)) folds into the YjeF N-terminal domain. Residue 61–65 (NNGGD) participates in (6S)-NADPHX binding. Residues N62 and D126 each coordinate K(+). Residues 130-136 (GFSFKPP) and D159 each bind (6S)-NADPHX. Residue S162 coordinates K(+).

Belongs to the NnrE/AIBP family. The cofactor is K(+).

It catalyses the reaction (6R)-NADHX = (6S)-NADHX. The catalysed reaction is (6R)-NADPHX = (6S)-NADPHX. Its function is as follows. Catalyzes the epimerization of the S- and R-forms of NAD(P)HX, a damaged form of NAD(P)H that is a result of enzymatic or heat-dependent hydration. This is a prerequisite for the S-specific NAD(P)H-hydrate dehydratase to allow the repair of both epimers of NAD(P)HX. The chain is NAD(P)H-hydrate epimerase from Drosophila yakuba (Fruit fly).